Consider the following 90-residue polypeptide: Putative membrane protein insertion efficiency factor (90 aa).

Belongs to the UPF0161 family.

It is found in the cell membrane. Its function is as follows. Could be involved in insertion of integral membrane proteins into the membrane. The polypeptide is Putative membrane protein insertion efficiency factor (Lactococcus lactis subsp. cremoris (strain SK11)).